Reading from the N-terminus, the 423-residue chain is Ferrochelatase, mitochondrial (423 aa).

The transit peptide at 1 to 29 (MISRKIISTINSKTFYNKSLSYCTVNNNK) directs the protein to the mitochondrion. Cys173 is a binding site for [2Fe-2S] cluster. Catalysis depends on residues His207 and Asp380. [2Fe-2S] cluster-binding residues include Cys401, Cys404, and Cys411.

The protein belongs to the ferrochelatase family. In terms of assembly, monomer. It depends on [2Fe-2S] cluster as a cofactor.

It is found in the mitochondrion inner membrane. It carries out the reaction heme b + 2 H(+) = protoporphyrin IX + Fe(2+). It functions in the pathway porphyrin-containing compound metabolism; protoheme biosynthesis; protoheme from protoporphyrin-IX: step 1/1. Functionally, catalyzes the ferrous insertion into protoporphyrin IX. In Dictyostelium discoideum (Social amoeba), this protein is Ferrochelatase, mitochondrial (hemH).